A 226-amino-acid polypeptide reads, in one-letter code: Ribonuclease 3 (226 aa).

Positions 7–129 (LPRLCRTLGY…IIGAIYLDSD (123 aa)) constitute an RNase III domain. Glutamate 42 is a binding site for Mg(2+). The active site involves aspartate 46. Mg(2+) contacts are provided by aspartate 115 and glutamate 118. The active site involves glutamate 118. The 71-residue stretch at 156–226 (DAKTLLQEYL…AAQVLELLKK (71 aa)) folds into the DRBM domain.

This sequence belongs to the ribonuclease III family. In terms of assembly, homodimer. It depends on Mg(2+) as a cofactor.

Its subcellular location is the cytoplasm. It carries out the reaction Endonucleolytic cleavage to 5'-phosphomonoester.. Its function is as follows. Digests double-stranded RNA. Involved in the processing of primary rRNA transcript to yield the immediate precursors to the large and small rRNAs (23S and 16S). Processes some mRNAs, and tRNAs when they are encoded in the rRNA operon. Processes pre-crRNA and tracrRNA of type II CRISPR loci if present in the organism. The chain is Ribonuclease 3 from Shewanella sp. (strain MR-7).